We begin with the raw amino-acid sequence, 95 residues long: Small ubiquitin-related modifier 2 (95 aa).

Lys11 is covalently cross-linked (Glycyl lysine isopeptide (Lys-Gly) (interchain with G-Cter in SUMO)). The Ubiquitin-like domain maps to 16 to 95; sequence DHINLKVAGQ…VFQQQTGGSF (80 aa). A Glycyl lysine isopeptide (Gly-Lys) (interchain with K-? in acceptor proteins) cross-link involves residue Gly93. Positions 94–95 are excised as a propeptide; sequence SF.

Belongs to the ubiquitin family. SUMO subfamily. In terms of assembly, interacts with sae2 and ube2i. Covalently attached to a number of proteins, including top2. In terms of processing, polymeric chains can be formed through Lys-11 cross-linking. Post-translationally, cleavage of precursor form by a sentrin-specific protease is necessary for function.

The protein resides in the nucleus. Ubiquitin-like protein that can be covalently attached to proteins as a monomer or as a lysine-linked polymer. Covalent attachment via an isopeptide bond to its substrates requires prior activation by the E1 complex sae1-sae2 and linkage to the E2 enzyme ube2i, and can be promoted by an E3 ligase such as pias1-4. This post-translational modification on lysine residues of proteins plays a crucial role in a number of cellular processes such as nuclear transport, DNA replication and repair, mitosis and signal transduction. Polymeric sumo2 chains are also susceptible to polyubiquitination which functions as a signal for proteasomal degradation of modified proteins. The sequence is that of Small ubiquitin-related modifier 2 (sumo2) from Xenopus tropicalis (Western clawed frog).